Here is a 194-residue protein sequence, read N- to C-terminus: dCTP deaminase (194 aa).

DCTP contacts are provided by residues 110–115, Asp-128, 136–138, Tyr-171, Lys-178, and Gln-182; these read RSSLAR and VLE. Glu-138 functions as the Proton donor/acceptor in the catalytic mechanism.

It belongs to the dCTP deaminase family. Homotrimer.

It carries out the reaction dCTP + H2O + H(+) = dUTP + NH4(+). The protein operates within pyrimidine metabolism; dUMP biosynthesis; dUMP from dCTP (dUTP route): step 1/2. Catalyzes the deamination of dCTP to dUTP. The chain is dCTP deaminase from Pseudoalteromonas translucida (strain TAC 125).